A 298-amino-acid polypeptide reads, in one-letter code: 4-diphosphocytidyl-2-C-methyl-D-erythritol kinase (298 aa).

The active site involves Lys15. 100–110 lines the ATP pocket; it reads PIAAGIGGGSA. Asp142 is an active-site residue.

It belongs to the GHMP kinase family. IspE subfamily.

The catalysed reaction is 4-CDP-2-C-methyl-D-erythritol + ATP = 4-CDP-2-C-methyl-D-erythritol 2-phosphate + ADP + H(+). It functions in the pathway isoprenoid biosynthesis; isopentenyl diphosphate biosynthesis via DXP pathway; isopentenyl diphosphate from 1-deoxy-D-xylulose 5-phosphate: step 3/6. Its function is as follows. Catalyzes the phosphorylation of the position 2 hydroxy group of 4-diphosphocytidyl-2C-methyl-D-erythritol. The sequence is that of 4-diphosphocytidyl-2-C-methyl-D-erythritol kinase from Rhodopseudomonas palustris (strain BisA53).